The following is a 159-amino-acid chain: NAD(P)H-quinone oxidoreductase subunit J, chloroplastic (159 aa).

Belongs to the complex I 30 kDa subunit family. As to quaternary structure, NDH is composed of at least 16 different subunits, 5 of which are encoded in the nucleus.

The protein resides in the plastid. It localises to the chloroplast thylakoid membrane. It carries out the reaction a plastoquinone + NADH + (n+1) H(+)(in) = a plastoquinol + NAD(+) + n H(+)(out). The enzyme catalyses a plastoquinone + NADPH + (n+1) H(+)(in) = a plastoquinol + NADP(+) + n H(+)(out). Its function is as follows. NDH shuttles electrons from NAD(P)H:plastoquinone, via FMN and iron-sulfur (Fe-S) centers, to quinones in the photosynthetic chain and possibly in a chloroplast respiratory chain. The immediate electron acceptor for the enzyme in this species is believed to be plastoquinone. Couples the redox reaction to proton translocation, and thus conserves the redox energy in a proton gradient. The chain is NAD(P)H-quinone oxidoreductase subunit J, chloroplastic from Populus trichocarpa (Western balsam poplar).